Here is a 282-residue protein sequence, read N- to C-terminus: Bifunctional protein FolD (282 aa).

NADP(+) contacts are provided by residues 165–167 and Ile-231; that span reads GAS.

This sequence belongs to the tetrahydrofolate dehydrogenase/cyclohydrolase family. In terms of assembly, homodimer.

The enzyme catalyses (6R)-5,10-methylene-5,6,7,8-tetrahydrofolate + NADP(+) = (6R)-5,10-methenyltetrahydrofolate + NADPH. It carries out the reaction (6R)-5,10-methenyltetrahydrofolate + H2O = (6R)-10-formyltetrahydrofolate + H(+). The protein operates within one-carbon metabolism; tetrahydrofolate interconversion. In terms of biological role, catalyzes the oxidation of 5,10-methylenetetrahydrofolate to 5,10-methenyltetrahydrofolate and then the hydrolysis of 5,10-methenyltetrahydrofolate to 10-formyltetrahydrofolate. This is Bifunctional protein FolD from Francisella tularensis subsp. holarctica (strain FTNF002-00 / FTA).